A 403-amino-acid polypeptide reads, in one-letter code: Alkaline protease 1 (403 aa).

The first 21 residues, 1 to 21, serve as a signal peptide directing secretion; it reads MLSIKRTLLLLGAVLPAVFGA. The propeptide occupies 22-125; that stretch reads PVQETRRAAQ…QIWYIDALTT (104 aa). Positions 36 to 120 constitute an Inhibitor I9 domain; sequence KYIVTFKPGT…HVEEDQIWYI (85 aa). The Peptidase S8 domain maps to 130–403; the sequence is PWGLGSISHK…PNKLAYNGNA (274 aa). Active-site charge relay system residues include aspartate 162 and histidine 193. N-linked (GlcNAc...) asparagine glycosylation is found at asparagine 253 and asparagine 307. Serine 349 functions as the Charge relay system in the catalytic mechanism.

This sequence belongs to the peptidase S8 family.

Its subcellular location is the secreted. It carries out the reaction Hydrolysis of proteins with broad specificity, and of Bz-Arg-OEt &gt; Ac-Tyr-OEt. Does not hydrolyze peptide amides.. Secreted alkaline protease that allows assimilation of proteinaceous substrates. The sequence is that of Alkaline protease 1 (alp1) from Neosartorya fischeri (strain ATCC 1020 / DSM 3700 / CBS 544.65 / FGSC A1164 / JCM 1740 / NRRL 181 / WB 181) (Aspergillus fischerianus).